A 592-amino-acid polypeptide reads, in one-letter code: Protein kinase C zeta type (592 aa).

The 84-residue stretch at 15-98 (RVRLKAHYGG…EVLIIHVFPS (84 aa)) folds into the PB1 domain. Residues 79–145 (AFRLACQGRD…KRFNRRAYCG (67 aa)) form an interaction with SQSTM1 region. Residues 130–180 (GHLFQAKRFNRRAYCGQCSERIWGLARQGYRCINCKLLVHKRCHVLVPLTC) form a Phorbol-ester/DAG-type zinc finger. One can recognise a Protein kinase domain in the interval 252-518 (FDLIRVIGRG…FSDIKSHAFF (267 aa)). Residues 258–266 (IGRGSYAKV) and Lys281 contribute to the ATP site. The Proton acceptor role is filled by Asp376. Position 410 is a phosphothreonine; by PDPK1 and PI3K (Thr410). The AGC-kinase C-terminal domain maps to 519–590 (RSIDWDLLEK…INPLLLSAEE (72 aa)). At Thr560 the chain carries Phosphothreonine. Ser591 carries the phosphoserine modification.

The protein belongs to the protein kinase superfamily. AGC Ser/Thr protein kinase family. PKC subfamily. As to quaternary structure, interacts with PARD6A, PARD6B and PARD6G. Part of a complex with PARD3, PARD6A or PARD6B or PARD6G and CDC42 or RAC1. Interacts with ADAP1/CENTA1. Forms a ternary complex with SQSTM1 and KCNAB2. Forms another ternary complex with SQSTM1 and GABRR3. Forms a complex with SQSTM1 and MAP2K5. Interacts (via the protein kinase domain) with WWC1. Forms a tripartite complex with WWC1 and DDR1, but predominantly in the absence of collagen. Component of the Par polarity complex, composed of at least phosphorylated PRKCZ, PARD3 and TIAM1. Interacts with PDPK1 (via N-terminal region). Interacts with WDFY2 (via WD repeats 1-3). Interacts with VAMP2. Forms a complex with WDFY2 and VAMP2. Interacts with APPL1. Interacts with WWC1, WWC2 and WWC3. CDH5 is required for its phosphorylation at Thr-410. Phosphorylated by protein kinase PDPK1; phosphorylation is inhibited by the apoptotic C-terminal cleavage product of PKN2. Phosphorylation at Thr-410 by PI3K activates the kinase. As to expression, isoform 1: In brain, expressed in hippocampus, neocortex and cerebellum (at protein level). Also expressed in lung, liver, kidney, testis and to a lesser extent in pancreas, intestine and skin (at protein level). Isoform 2: Specifically expressed in brain where it localizes to the hippocampus, neocortex and cerebellum (at protein level).

It localises to the cytoplasm. It is found in the endosome. The protein resides in the cell junction. The protein localises to the membrane. It carries out the reaction L-seryl-[protein] + ATP = O-phospho-L-seryl-[protein] + ADP + H(+). The enzyme catalyses L-threonyl-[protein] + ATP = O-phospho-L-threonyl-[protein] + ADP + H(+). With respect to regulation, atypical PKCs (PRKCI and PRKCZ) exhibit an elevated basal enzymatic activity (that may be due to the interaction with SMG1 or SQSTM1) and are not regulated by diacylglycerol, phosphatidylserine, phorbol esters or calcium ions. Two specific sites, Thr-410 (activation loop of the kinase domain) and Thr-560 (turn motif), need to be phosphorylated for its full activation. Phosphatidylinositol 3,4,5-trisphosphate might be a physiological activator. Isoform 2: Constitutively active. Its function is as follows. Calcium- and diacylglycerol-independent serine/threonine-protein kinase that functions in phosphatidylinositol 3-kinase (PI3K) pathway and mitogen-activated protein (MAP) kinase cascade, and is involved in NF-kappa-B activation, mitogenic signaling, cell proliferation, cell polarity, inflammatory response and maintenance of long-term potentiation (LTP). Upon lipopolysaccharide (LPS) treatment in macrophages, or following mitogenic stimuli, functions downstream of PI3K to activate MAP2K1/MEK1-MAPK1/ERK2 signaling cascade independently of RAF1 activation. Required for insulin-dependent activation of AKT3, but may function as an adapter rather than a direct activator. Upon insulin treatment may act as a downstream effector of PI3K and contribute to the activation of translocation of the glucose transporter SLC2A4/GLUT4 and subsequent glucose transport in adipocytes. In EGF-induced cells, binds and activates MAP2K5/MEK5-MAPK7/ERK5 independently of its kinase activity and can activate JUN promoter through MEF2C. Through binding with SQSTM1/p62, functions in interleukin-1 signaling and activation of NF-kappa-B with the specific adapters RIPK1 and TRAF6. Participates in TNF-dependent transactivation of NF-kappa-B by phosphorylating and activating IKBKB kinase, which in turn leads to the degradation of NF-kappa-B inhibitors. In migrating astrocytes, forms a cytoplasmic complex with PARD6A and is recruited by CDC42 to function in the establishment of cell polarity along with the microtubule motor and dynein. In association with FEZ1, stimulates neuronal differentiation in PC12 cells. In the inflammatory response, is required for the T-helper 2 (Th2) differentiation process, including interleukin production, efficient activation of JAK1 and the subsequent phosphorylation and nuclear translocation of STAT6. May be involved in development of allergic airway inflammation (asthma), a process dependent on Th2 immune response. In the NF-kappa-B-mediated inflammatory response, can relieve SETD6-dependent repression of NF-kappa-B target genes by phosphorylating the RELA subunit at 'Ser-311'. Phosphorylates VAMP2 in vitro. Phosphorylates and activates LRRK1, which phosphorylates RAB proteins involved in intracellular trafficking. Involved in late synaptic long term potentiation phase in CA1 hippocampal cells and long term memory maintenance. The chain is Protein kinase C zeta type (Prkcz) from Rattus norvegicus (Rat).